A 142-amino-acid chain; its full sequence is Large ribosomal subunit protein uL11 (142 aa).

The protein belongs to the universal ribosomal protein uL11 family. In terms of assembly, part of the ribosomal stalk of the 50S ribosomal subunit. Interacts with L10 and the large rRNA to form the base of the stalk. L10 forms an elongated spine to which L12 dimers bind in a sequential fashion forming a multimeric L10(L12)X complex. One or more lysine residues are methylated.

In terms of biological role, forms part of the ribosomal stalk which helps the ribosome interact with GTP-bound translation factors. This chain is Large ribosomal subunit protein uL11, found in Methylocella silvestris (strain DSM 15510 / CIP 108128 / LMG 27833 / NCIMB 13906 / BL2).